The following is a 380-amino-acid chain: MIYLPDGVQDFLPEEYKFKRKIEEKFREVFIKFGYQEIMPPTFEYNDNFSVLFDENNLYRFFDKKGNILALRPDVTTQIARIVSTKLKGSFPLKLCYVANVYRYDDPQVGKMREFTQAGIELIGTNHEESDAEIIAVAIEALKSIGIEDFKVDVGQVEFFKRVVEDLELQNEEINLLREFLQQKNQSAIEEFINDKGIRGKKAKFLSELPLLFGGEEVLKRAKELYDTPKLGETIDYLERVYRILKDFGMEEYISFDLGMVQNLNYYTGIIFRCFVKGIGYAICTGGRYDGLLGIFGEHIPATGFAISVERSMLALQKQKKDIIDKSWRVLIKYKENLRSNAYKKATLLRGEGKIVEMYSYEKAKHVDENSFDEIIDMEE.

It belongs to the class-II aminoacyl-tRNA synthetase family. HisZ subfamily. As to quaternary structure, heteromultimer composed of HisG and HisZ subunits.

Its subcellular location is the cytoplasm. It participates in amino-acid biosynthesis; L-histidine biosynthesis; L-histidine from 5-phospho-alpha-D-ribose 1-diphosphate: step 1/9. Required for the first step of histidine biosynthesis. May allow the feedback regulation of ATP phosphoribosyltransferase activity by histidine. The protein is ATP phosphoribosyltransferase regulatory subunit of Thermoanaerobacter sp. (strain X514).